The following is a 420-amino-acid chain: DNA primase small subunit (420 aa).

Methionine 1 is modified (N-acetylmethionine). Catalysis depends on residues glutamate 44, aspartate 109, and aspartate 111. Aspartate 109 and aspartate 111 together coordinate Mg(2+). Mn(2+)-binding residues include aspartate 109 and aspartate 111. Position 109-111 (109-111) interacts with a ribonucleoside 5'-triphosphate; sequence DID. 4 residues coordinate Zn(2+): cysteine 121, cysteine 122, cysteine 128, and cysteine 131. The short motif at 121–131 is the Zinc knuckle motif element; sequence CCSSADICPKC. 160 to 166 is a binding site for a ribonucleoside 5'-triphosphate; the sequence is SGRRGVH. Aspartate 306 serves as a coordination point for Mg(2+). Aspartate 306 contributes to the Mn(2+) binding site. A ribonucleoside 5'-triphosphate is bound by residues 315–318 and histidine 324; that span reads HLLK. Residues 363-373 are compositionally biased toward acidic residues; it reads NEEEKEENEAE. A disordered region spans residues 363-382; sequence NEEEKEENEAESDVKHRTRD.

Belongs to the eukaryotic-type primase small subunit family. Heterodimer of a catalytic subunit PRIM1 and a regulatory subunit PRIM2, also known as the DNA primase complex. Interacts with PRIM2 (via C-terminus). Component of the alpha DNA polymerase complex (also known as the alpha DNA polymerase-primase complex) consisting of four subunits: the catalytic subunit POLA1, the regulatory subunit POLA2, and the primase complex subunits PRIM1 and PRIM2 respectively. Within the complex, POLA1 directly interacts with PRIM2. Mg(2+) serves as cofactor. Mn(2+) is required as a cofactor.

It catalyses the reaction ssDNA + n NTP = ssDNA/pppN(pN)n-1 hybrid + (n-1) diphosphate.. Its activity is regulated as follows. The presence of the regulatory subunit PRIM2/p58 accelerates the kinetics of initiation and primer extension. Inhibited by arabinose nucleoside derivatives such as fludarabine and vidarabine. Catalytic subunit of the DNA primase complex and component of the DNA polymerase alpha complex (also known as the alpha DNA polymerase-primase complex - primosome/replisome) which play an essential role in the initiation of DNA synthesis. During the S phase of the cell cycle, the DNA polymerase alpha complex (composed of a catalytic subunit POLA1, an accessory subunit POLA2 and two primase subunits, the catalytic subunit PRIM1 and the regulatory subunit PRIM2) is recruited to DNA at the replicative forks via direct interactions with MCM10 and WDHD1. The primase subunit of the polymerase alpha complex initiates DNA synthesis by oligomerising short RNA primers on both leading and lagging strands. These primers are initially extended by the polymerase alpha catalytic subunit and subsequently transferred to polymerase delta and polymerase epsilon for processive synthesis on the lagging and leading strand, respectively. In the primase complex, both subunits are necessary for the initial di-nucleotide formation, but the extension of the primer depends only on the catalytic subunit. Synthesizes 9-mer RNA primers (also known as the 'unit length' RNA primers). Incorporates only ribonucleotides in the presence of ribo- and deoxy-nucleotide triphosphates (rNTPs, dNTPs). Requires template thymine or cytidine to start the RNA primer synthesis, with an adenine or guanine at its 5'-end. Binds single stranded DNA. The polypeptide is DNA primase small subunit (PRIM1) (Homo sapiens (Human)).